Here is a 227-residue protein sequence, read N- to C-terminus: 7-cyano-7-deazaguanine synthase (227 aa).

8-18 lines the ATP pocket; it reads LSGGLDSATVL. Cys-191, Cys-201, Cys-204, and Cys-207 together coordinate Zn(2+).

It belongs to the QueC family. It depends on Zn(2+) as a cofactor.

It catalyses the reaction 7-carboxy-7-deazaguanine + NH4(+) + ATP = 7-cyano-7-deazaguanine + ADP + phosphate + H2O + H(+). It functions in the pathway purine metabolism; 7-cyano-7-deazaguanine biosynthesis. Catalyzes the ATP-dependent conversion of 7-carboxy-7-deazaguanine (CDG) to 7-cyano-7-deazaguanine (preQ(0)). The protein is 7-cyano-7-deazaguanine synthase of Paramagnetospirillum magneticum (strain ATCC 700264 / AMB-1) (Magnetospirillum magneticum).